We begin with the raw amino-acid sequence, 73 residues long: Aminopeptidase G (73 aa).

Positions 39 to 73 are disordered; sequence GRRAASSSWPGRGSSRRWRPGRRTGAAARGCWRAP. Composition is skewed to low complexity over residues 42-51 and 61-73; these read AASSSWPGRG and RTGAAARGCWRAP.

The protein belongs to the peptidase M1 family. Zn(2+) serves as cofactor.

Its subcellular location is the cytoplasm. Its function is as follows. Hydrolyzes preferentially the N-terminal glycine and can also hydrolyze other amino acids which are used by PepN but is unable to hydrolyze basic amino acids. The sequence is that of Aminopeptidase G (pepG) from Streptomyces lividans.